The sequence spans 293 residues: Acetyl-coenzyme A carboxylase carboxyl transferase subunit beta (293 aa).

Residues 29 to 293 (LWSKCPECGL…GSKSLELTNA (265 aa)) form the CoA carboxyltransferase N-terminal domain. Zn(2+) is bound by residues Cys-33, Cys-36, Cys-52, and Cys-55. A C4-type zinc finger spans residues 33 to 55 (CPECGLVVYLKDLRLNASVCAGC).

This sequence belongs to the AccD/PCCB family. As to quaternary structure, acetyl-CoA carboxylase is a heterohexamer composed of biotin carboxyl carrier protein (AccB), biotin carboxylase (AccC) and two subunits each of ACCase subunit alpha (AccA) and ACCase subunit beta (AccD). Zn(2+) serves as cofactor.

It localises to the cytoplasm. The enzyme catalyses N(6)-carboxybiotinyl-L-lysyl-[protein] + acetyl-CoA = N(6)-biotinyl-L-lysyl-[protein] + malonyl-CoA. It functions in the pathway lipid metabolism; malonyl-CoA biosynthesis; malonyl-CoA from acetyl-CoA: step 1/1. Functionally, component of the acetyl coenzyme A carboxylase (ACC) complex. Biotin carboxylase (BC) catalyzes the carboxylation of biotin on its carrier protein (BCCP) and then the CO(2) group is transferred by the transcarboxylase to acetyl-CoA to form malonyl-CoA. This Synechococcus sp. (strain CC9902) protein is Acetyl-coenzyme A carboxylase carboxyl transferase subunit beta.